The sequence spans 749 residues: Protein O-mannosyl-transferase 2 (749 aa).

The disordered stretch occupies residues M1–N30. A helical transmembrane segment spans residues N34 to Y54. Residues N78, N104, and N117 are each glycosylated (N-linked (GlcNAc...) asparagine). 5 consecutive transmembrane segments (helical) span residues Y126–L146, I173–I193, S204–V224, F226–I246, and I266–V286. 2 N-linked (GlcNAc...) asparagine glycosylation sites follow: N288 and N312. 3 consecutive MIR domains span residues P316–H372, L382–V438, and N443–N499. N-linked (GlcNAc...) asparagine glycosylation is present at N443. 4 consecutive transmembrane segments (helical) span residues I572–I592, L645–M665, L669–F689, and V703–A723. N735 carries N-linked (GlcNAc...) asparagine glycosylation.

It belongs to the glycosyltransferase 39 family. As to quaternary structure, interacts with Rt/POMT1.

The protein localises to the endoplasmic reticulum membrane. The enzyme catalyses a di-trans,poly-cis-dolichyl beta-D-mannosyl phosphate + L-seryl-[protein] = 3-O-(alpha-D-mannosyl)-L-seryl-[protein] + a di-trans,poly-cis-dolichyl phosphate + H(+). It carries out the reaction a di-trans,poly-cis-dolichyl beta-D-mannosyl phosphate + L-threonyl-[protein] = 3-O-(alpha-D-mannosyl)-L-threonyl-[protein] + a di-trans,poly-cis-dolichyl phosphate + H(+). It participates in protein modification; protein glycosylation. In terms of biological role, rt/POMT1 and tw/POMT2 function as a protein O-mannosyltransferase in association with each other to generate and maintain normal muscle development. The polypeptide is Protein O-mannosyl-transferase 2 (Drosophila pseudoobscura pseudoobscura (Fruit fly)).